Here is a 205-residue protein sequence, read N- to C-terminus: FMN-dependent NADH:quinone oxidoreductase (205 aa).

Residues serine 10 and 16-18 (SVS) contribute to the FMN site.

Belongs to the azoreductase type 1 family. In terms of assembly, homodimer. It depends on FMN as a cofactor.

The catalysed reaction is 2 a quinone + NADH + H(+) = 2 a 1,4-benzosemiquinone + NAD(+). It carries out the reaction N,N-dimethyl-1,4-phenylenediamine + anthranilate + 2 NAD(+) = 2-(4-dimethylaminophenyl)diazenylbenzoate + 2 NADH + 2 H(+). Functionally, quinone reductase that provides resistance to thiol-specific stress caused by electrophilic quinones. Also exhibits azoreductase activity. Catalyzes the reductive cleavage of the azo bond in aromatic azo compounds to the corresponding amines. This Agrobacterium fabrum (strain C58 / ATCC 33970) (Agrobacterium tumefaciens (strain C58)) protein is FMN-dependent NADH:quinone oxidoreductase.